The chain runs to 499 residues: Zinc finger protein PLAG1 (499 aa).

Residues 1–33 form a disordered region; that stretch reads MATVIPGDLSEVRDTQKAPSGKRKRGESKPRKN. Residues 2–84 form an interaction with KPNA2 region; sequence ATVIPGDLSE…SKYKLQRHMA (83 aa). The short motif at 22–25 is the Nuclear localization signal element; it reads KRKR. C2H2-type zinc fingers lie at residues 34–56, 62–86, 92–114, 121–143, 150–172, 185–207, and 213–236; these read FPCQ…SFSH, YKCT…MATH, HKCN…LHTH, FKCE…LALH, LTCK…LKSH, HQCE…MVVH, and FLCQ…KKSH. The segment at 41 to 242 is decreased nuclear import with localization in the nucleus but also in the cytoplasm; that stretch reads KAFNSVEKLK…KKSHNQELLK (202 aa). Positions 243–383 are repression domain; contains 3 sumoylation motifs and massively decrease transcription activity; sequence VKTEPVDFLD…SQASSSKLGL (141 aa). Residues 243-499 form an activates transcription; Inhibition of nuclear import due to lack of NLS and KPNA2 interaction region; sequence VKTEPVDFLD…TLPRFHQAFQ (257 aa). Glycyl lysine isopeptide (Lys-Gly) (interchain with G-Cter in SUMO) cross-links involve residues Lys244 and Lys263. Residues 364–400 are disordered; the sequence is QGGAPSSSQDSQASSSKLGLEPQSGSPDDGAGDLSLS. Over residues 369–379 the composition is skewed to low complexity; sequence SSSQDSQASSS. Residues 384-499 form a massively activates transcription region; it reads EPQSGSPDDG…TLPRFHQAFQ (116 aa).

This sequence belongs to the krueppel C2H2-type zinc-finger protein family. Interacts with KPNA2, which escorts protein to the nucleus via interaction with nuclear localization signal. Interacts with E3 SUMO-protein ligase PIAS1, PIAS2 and PIAS4. Sumoylated with SUMO1; which inhibits transcriptional activity, but does not affect nuclear localization. Blockers of sumoylation pathway such as SENP3 and inactive UBE2I increases transcriptional capacity. Sumoylation is increased in the presence of PIAS1. Post-translationally, acetylated by lysine acetyltransferase EP300; which activates transcriptional capacity. Lysine residues that are sumoylated also seem to be target for acetylation. Expressed in heart, spleen, lung, kidney, brain, testis and epididymis but not in salivary glands.

Its subcellular location is the nucleus. Functionally, transcription factor whose activation results in up-regulation of target genes, such as IGFII, leading to uncontrolled cell proliferation: when overexpressed in cultured cells, higher proliferation rate and transformation are observed. Other target genes such as CRLF1, CRABP2, CRIP2, PIGF are strongly induced in cells with PLAG1 induction. Proto-oncogene whose ectopic expression can trigger the development of pleomorphic adenomas of the salivary gland and lipoblastomas. Cooperates with CBFB-MYH11. In Rattus norvegicus (Rat), this protein is Zinc finger protein PLAG1 (Plag1).